We begin with the raw amino-acid sequence, 123 residues long: Putative iron-sulfur cluster insertion protein ErpA (123 aa).

Positions 51, 115, and 117 each coordinate iron-sulfur cluster.

This sequence belongs to the HesB/IscA family. Homodimer. Requires iron-sulfur cluster as cofactor.

Functionally, required for insertion of 4Fe-4S clusters. This chain is Putative iron-sulfur cluster insertion protein ErpA, found in Burkholderia multivorans (strain ATCC 17616 / 249).